We begin with the raw amino-acid sequence, 102 residues long: MKIIREAMAGTLESSDVMVRIAPAEGPEHDLLIASSVEKQFGEAIRQTLLQVLQHYQVEPVQVMVDDKGALDCVLRARLETALMRACDNGQLPWGAPNENAE.

S14 is modified (O-(phosphoribosyl dephospho-coenzyme A)serine).

The protein belongs to the CitD family. As to quaternary structure, oligomer with a subunit composition of (alpha,beta,gamma)6.

Its subcellular location is the cytoplasm. In terms of biological role, covalent carrier of the coenzyme of citrate lyase. In Serratia proteamaculans (strain 568), this protein is Citrate lyase acyl carrier protein.